The primary structure comprises 547 residues: Chaperonin GroEL (547 aa).

ATP is bound by residues 30–33 (TLGP), Lys51, 87–91 (DGTTT), Gly415, 479–481 (NAA), and Asp495. Residues 525–547 (PKEDSPGAGAGMGGMGGMGGMDM) form a disordered region. Gly residues predominate over residues 532–547 (AGAGMGGMGGMGGMDM).

This sequence belongs to the chaperonin (HSP60) family. Forms a cylinder of 14 subunits composed of two heptameric rings stacked back-to-back. Interacts with the co-chaperonin GroES.

It localises to the cytoplasm. The enzyme catalyses ATP + H2O + a folded polypeptide = ADP + phosphate + an unfolded polypeptide.. Together with its co-chaperonin GroES, plays an essential role in assisting protein folding. The GroEL-GroES system forms a nano-cage that allows encapsulation of the non-native substrate proteins and provides a physical environment optimized to promote and accelerate protein folding. The protein is Chaperonin GroEL of Nitrosomonas europaea (strain ATCC 19718 / CIP 103999 / KCTC 2705 / NBRC 14298).